Here is a 31-residue protein sequence, read N- to C-terminus: Cytochrome b6-f complex subunit 8 (31 aa).

A helical transmembrane segment spans residues 5–25; that stretch reads IVSMAWAALMVVFTFSLSLVI.

This sequence belongs to the PetN family. The 4 large subunits of the cytochrome b6-f complex are cytochrome b6, subunit IV (17 kDa polypeptide, PetD), cytochrome f and the Rieske protein, while the 4 small subunits are PetG, PetL, PetM and PetN. The complex functions as a dimer.

Its subcellular location is the plastid membrane. Its function is as follows. Component of the cytochrome b6-f complex, which mediates electron transfer between photosystem II (PSII) and photosystem I (PSI), cyclic electron flow around PSI, and state transitions. The protein is Cytochrome b6-f complex subunit 8 of Cuscuta gronovii (Common dodder).